Here is a 330-residue protein sequence, read N- to C-terminus: ADP-L-glycero-D-manno-heptose-6-epimerase (330 aa).

Residues 11–12, 32–33, Lys39, Lys54, 75–79, and Asn92 each bind NADP(+); these read FI, DN, and EGACS. Tyr139 functions as the Proton acceptor in the catalytic mechanism. Residue Lys143 participates in NADP(+) binding. Asn168 contributes to the substrate binding site. The NADP(+) site is built by Val169 and Lys177. Lys177 serves as the catalytic Proton acceptor. Residues Arg179, His186, 200-203, Arg213, and Tyr292 contribute to the substrate site; that span reads FGEY.

Belongs to the NAD(P)-dependent epimerase/dehydratase family. HldD subfamily. In terms of assembly, homopentamer. NADP(+) is required as a cofactor.

The enzyme catalyses ADP-D-glycero-beta-D-manno-heptose = ADP-L-glycero-beta-D-manno-heptose. It participates in nucleotide-sugar biosynthesis; ADP-L-glycero-beta-D-manno-heptose biosynthesis; ADP-L-glycero-beta-D-manno-heptose from D-glycero-beta-D-manno-heptose 7-phosphate: step 4/4. Its function is as follows. Catalyzes the interconversion between ADP-D-glycero-beta-D-manno-heptose and ADP-L-glycero-beta-D-manno-heptose via an epimerization at carbon 6 of the heptose. In Burkholderia cenocepacia (strain HI2424), this protein is ADP-L-glycero-D-manno-heptose-6-epimerase.